Reading from the N-terminus, the 329-residue chain is GTP 3',8-cyclase (329 aa).

In terms of domain architecture, Radical SAM core spans 1 to 229; that stretch reads MNQIDYLRIS…EGQVRGNGPA (229 aa). Residue Arg-8 participates in GTP binding. 2 residues coordinate [4Fe-4S] cluster: Cys-15 and Cys-19. Residue Tyr-21 participates in S-adenosyl-L-methionine binding. Cys-22 is a binding site for [4Fe-4S] cluster. Arg-60 serves as a coordination point for GTP. Gly-64 provides a ligand contact to S-adenosyl-L-methionine. Thr-91 contacts GTP. Ser-115 contacts S-adenosyl-L-methionine. Lys-155 is a GTP binding site. Met-189 is a binding site for S-adenosyl-L-methionine. [4Fe-4S] cluster contacts are provided by Cys-252 and Cys-255. Position 257–259 (257–259) interacts with GTP; sequence RLR. Cys-269 provides a ligand contact to [4Fe-4S] cluster.

It belongs to the radical SAM superfamily. MoaA family. In terms of assembly, monomer and homodimer. [4Fe-4S] cluster is required as a cofactor.

It carries out the reaction GTP + AH2 + S-adenosyl-L-methionine = (8S)-3',8-cyclo-7,8-dihydroguanosine 5'-triphosphate + 5'-deoxyadenosine + L-methionine + A + H(+). The protein operates within cofactor biosynthesis; molybdopterin biosynthesis. Catalyzes the cyclization of GTP to (8S)-3',8-cyclo-7,8-dihydroguanosine 5'-triphosphate. The protein is GTP 3',8-cyclase of Microcystis aeruginosa (strain NIES-843 / IAM M-2473).